The primary structure comprises 428 residues: Phosphoribosylamine--glycine ligase (428 aa).

Residues 109–316 form the ATP-grasp domain; the sequence is KDFLHRHGIP…LVELCLAALD (208 aa). 135-196 is a binding site for ATP; it reads LRQVGAPVVV…EEFLTGEEAS (62 aa). The interval 211 to 235 is disordered; that stretch reads SSQDHKARDDGDRGPNTGGMGAYSP. Residues 213–223 are compositionally biased toward basic and acidic residues; sequence QDHKARDDGDR. Mg(2+) contacts are provided by E286 and N288.

Belongs to the GARS family. The cofactor is Mg(2+). It depends on Mn(2+) as a cofactor.

It carries out the reaction 5-phospho-beta-D-ribosylamine + glycine + ATP = N(1)-(5-phospho-beta-D-ribosyl)glycinamide + ADP + phosphate + H(+). Its pathway is purine metabolism; IMP biosynthesis via de novo pathway; N(1)-(5-phospho-D-ribosyl)glycinamide from 5-phospho-alpha-D-ribose 1-diphosphate: step 2/2. The chain is Phosphoribosylamine--glycine ligase (purD) from Allochromatium vinosum (strain ATCC 17899 / DSM 180 / NBRC 103801 / NCIMB 10441 / D) (Chromatium vinosum).